The primary structure comprises 139 residues: Large ribosomal subunit protein uL16c (139 aa).

A compositionally biased stretch (basic residues) spans 1-17; the sequence is MLSPKKTKFRKQHRGRM. The disordered stretch occupies residues 1–23; that stretch reads MLSPKKTKFRKQHRGRMKGSASK.

The protein belongs to the universal ribosomal protein uL16 family. Part of the 50S ribosomal subunit.

The protein localises to the plastid. The protein resides in the chloroplast. The polypeptide is Large ribosomal subunit protein uL16c (Porphyra purpurea (Red seaweed)).